The primary structure comprises 878 residues: Longitudinals lacking protein, isoforms N/O/W/X/Y (878 aa).

A BTB domain is found at 32–97; it reads VDCTLAAEGK…MYRGEVNISQ (66 aa). 3 disordered regions span residues 115–200, 228–340, and 542–583; these read LSDN…SSVL, SSGP…ASAS, and QIVK…QTHA. Low complexity-rich tracts occupy residues 162–175, 228–251, 263–293, 329–340, and 546–569; these read SGDV…SSSP, SSGP…LTST, TSST…QTTS, NSATGPNPASAS, and QQHQ…QQQQ. The segment at 709–731 adopts a C2H2-type 1; degenerate zinc-finger fold; sequence YACNVCGKTYKIKGSLKRHKNYE. The C2H2-type 2 zinc finger occupies 794–816; the sequence is FQCDFCLKWFKRRSHLNRHKKLH. The tract at residues 826–863 is disordered; sequence SKQKPKTTSGQNLSHDANTDDEVATTNPAATEDESNYP. Over residues 831–841 the composition is skewed to polar residues; sequence KTTSGQNLSHD.

As to expression, by stage 11, isoform W, isoform X and isoform Y are expressed throughout the mesoderm, whereas isoform O is expressed in both mesoderm and ectoderm. From stage 15, expression of isoform O expands to all tissues, whereas expression of isoform W, isoform X and isoform Y becomes restricted during later stages; starting from stage 14 to 16, isoform W, isoform X and isoform Y are expressed in muscle. From stages 14 and 15, isoform W and isoform Y are expressed in the gut. For some isoforms, expression is also seen in specific types of cells in the embryo; isoform O is expressed in the ventral furrow at stage 5 and in the dorsal epidermis from stage 7. Isoform Y shows prominent expression in the gonad starting at stage 15.

Its subcellular location is the nucleus. Its function is as follows. Putative transcription factor required for axon growth and guidance in the central and peripheral nervous systems. Repels CNS axons away from the midline by promoting the expression of the midline repellent sli and its receptor robo. In Drosophila melanogaster (Fruit fly), this protein is Longitudinals lacking protein, isoforms N/O/W/X/Y.